A 211-amino-acid chain; its full sequence is Superoxide dismutase [Fe] (211 aa).

Residues His-31, His-79, Asp-165, and His-169 each coordinate Fe cation.

It belongs to the iron/manganese superoxide dismutase family. As to quaternary structure, homotetramer. Requires Fe cation as cofactor.

The catalysed reaction is 2 superoxide + 2 H(+) = H2O2 + O2. Destroys superoxide anion radicals which are normally produced within the cells and which are toxic to biological systems. The protein is Superoxide dismutase [Fe] (sod) of Pyrobaculum aerophilum (strain ATCC 51768 / DSM 7523 / JCM 9630 / CIP 104966 / NBRC 100827 / IM2).